A 328-amino-acid polypeptide reads, in one-letter code: CCAAT/enhancer-binding protein beta (328 aa).

R3 carries the post-translational modification Asymmetric dimethylarginine; by CARM1. K39 is subject to N6-methylated lysine. A disordered region spans residues 165 to 274 (DSCKGPRKEE…NIAVRKSRDK (110 aa)). Low complexity predominate over residues 200-231 (SVPSGSSGNLSTSSSSSPPGTPNPSESSKSAA). Residue T220 is modified to Phosphothreonine; by RPS6KA1, CDK2 and MAPK. Residues 248–264 (KCVDKHSDEYKLRRERN) show a composition bias toward basic and acidic residues. A bZIP domain is found at 254–317 (SDEYKLRRER…STLRNLFKQL (64 aa)). A basic motif region spans residues 258-278 (KLRRERNNIAVRKSRDKAKMR). Positions 280-287 (LETQHKVL) are leucine-zipper.

It belongs to the bZIP family. C/EBP subfamily. Binds DNA as a dimer. Interacts (not methylated) with MED23, MED26, SMARCA2, SMARCB1 and SMARCC1. In terms of processing, methylated. Methylation at Arg-3 by CARM1 and at Lys-39 by EHMT2, inhibit transactivation activity. Methylation is probably inhibited by phosphorylation at Thr-220. Specifically expressed in myelomoncytic cells.

The protein resides in the nucleus. Its function is as follows. Important transcriptional activator regulating the expression of genes involved in immune and inflammatory responses. Binds to regulatory regions of several acute-phase and cytokines genes and probably plays a role in the regulation of acute-phase reaction, inflammation and hemopoiesis. The consensus recognition site is 5'-T[TG]NNGNAA[TG]-3'. Functions in brown adipose tissue (BAT) differentiation. Regulates the transcriptional induction of peroxisome proliferator-activated receptor gamma (PPARG). Binds to the MGF and MIM-1 promoters and activates the transcription of these genes. In terms of biological role, important transcription factor regulating the expression of genes involved in immune and inflammatory responses. Also plays a significant role in adipogenesis, as well as in the gluconeogenic pathway, liver regeneration, and hematopoiesis. The consensus recognition site is 5'-T[TG]NNGNAA[TG]-3'. Its functional capacity is governed by protein interactions and post-translational protein modifications. This is CCAAT/enhancer-binding protein beta (CEBPB) from Gallus gallus (Chicken).